Consider the following 821-residue polypeptide: TORTIFOLIA1-like protein 1 (821 aa).

HEAT repeat units follow at residues 69 to 110 (PDSP…SYTD), 114 to 151 (SQLAKIISHIVKRLKDADNGVRDACRDAIGSLSAQFLK), 163 to 201 (SSLVGLFAKPLFEAMAEQNKSLQSGAAICMGKMIDSATE), 205 to 242 (AAFQKLCPRISKLLNSPNYITKASLLPVVGSLSQVGAI), and 245 to 282 (QSLESLLHSIHECLGCTNWVTRKAAADVLISLAVHSSS). S406 carries the phosphoserine modification. Disordered regions lie at residues 416–437 (PSRQKNSSNSNTEDESDANTSV) and 553–610 (MSIQ…RAWD). Positions 501 to 554 (PPLQRQLLHLERQQTHIMNMLQDFMGGSHDGMISLENRVRGLERIVEEMSREMS) form a coiled coil. Positions 579 to 590 (YGPSSRNTQTST) are enriched in polar residues.

In terms of tissue distribution, expressed at low levels in roots, hypocotyls, stems, flowers, siliques, cotyledons, and leaves. Particularly present in hydathodes of cotyledons and root hairs.

Its subcellular location is the cytoplasm. The protein localises to the cytoskeleton. In terms of biological role, plant-specific microtubule-associated protein (MAP) that regulates the orientation of cortical microtubules and the direction of organ growth. The protein is TORTIFOLIA1-like protein 1 of Arabidopsis thaliana (Mouse-ear cress).